We begin with the raw amino-acid sequence, 427 residues long: 3-phosphoshikimate 1-carboxyvinyltransferase (427 aa).

3 residues coordinate 3-phosphoshikimate: K22, S23, and R27. Position 22 (K22) interacts with phosphoenolpyruvate. G94 and R122 together coordinate phosphoenolpyruvate. S165, Q167, D313, and K340 together coordinate 3-phosphoshikimate. Q167 lines the phosphoenolpyruvate pocket. The Proton acceptor role is filled by D313. Positions 344 and 386 each coordinate phosphoenolpyruvate.

The protein belongs to the EPSP synthase family. As to quaternary structure, monomer.

Its subcellular location is the cytoplasm. It carries out the reaction 3-phosphoshikimate + phosphoenolpyruvate = 5-O-(1-carboxyvinyl)-3-phosphoshikimate + phosphate. It participates in metabolic intermediate biosynthesis; chorismate biosynthesis; chorismate from D-erythrose 4-phosphate and phosphoenolpyruvate: step 6/7. Catalyzes the transfer of the enolpyruvyl moiety of phosphoenolpyruvate (PEP) to the 5-hydroxyl of shikimate-3-phosphate (S3P) to produce enolpyruvyl shikimate-3-phosphate and inorganic phosphate. This chain is 3-phosphoshikimate 1-carboxyvinyltransferase, found in Koribacter versatilis (strain Ellin345).